The chain runs to 74 residues: Cytochrome c oxidase assembly factor 5 (74 aa).

The CHCH domain maps to 27–65; the sequence is ESDCVVQEGKSPRQCLKEGYCNSLKYAFFECKRSVLDNR. The Cx10C motif signature appears at 30–41; the sequence is CVVQEGKSPRQC. Intrachain disulfides connect C30–C57 and C41–C47. S37 is subject to Phosphoserine. The Cx9C motif signature appears at 47–57; that stretch reads CNSLKYAFFEC.

It belongs to the PET191 family.

In terms of biological role, involved in an early step of the mitochondrial complex IV assembly process. This Pongo abelii (Sumatran orangutan) protein is Cytochrome c oxidase assembly factor 5 (Coa5).